A 110-amino-acid chain; its full sequence is Small ribosomal subunit protein uS17 (110 aa).

This sequence belongs to the universal ribosomal protein uS17 family. As to quaternary structure, part of the 30S ribosomal subunit.

Its function is as follows. One of the primary rRNA binding proteins, it binds specifically to the 5'-end of 16S ribosomal RNA. The polypeptide is Small ribosomal subunit protein uS17 (Petrotoga mobilis (strain DSM 10674 / SJ95)).